A 90-amino-acid chain; its full sequence is UPF0237 protein NMA1909 (90 aa).

The ACT domain occupies 5–83 (VITVIGKDRV…LDIRMQNEEI (79 aa)).

The protein belongs to the UPF0237 family.

The polypeptide is UPF0237 protein NMA1909 (Neisseria meningitidis serogroup A / serotype 4A (strain DSM 15465 / Z2491)).